The following is a 391-amino-acid chain: Formate-dependent phosphoribosylglycinamide formyltransferase (391 aa).

Residues 18–19 and Glu78 each bind N(1)-(5-phospho-beta-D-ribosyl)glycinamide; that span reads EL. ATP contacts are provided by residues Arg110, Lys151, 156 to 161, 191 to 194, and Glu199; these read SSGKGQ and EEFI. In terms of domain architecture, ATP-grasp spans 115 to 305; that stretch reads ELAHEELGIR…EFELHLRAIL (191 aa). Glu264 and Glu276 together coordinate Mg(2+). Residues Asp283, Lys353, and 360 to 361 contribute to the N(1)-(5-phospho-beta-D-ribosyl)glycinamide site; that span reads RR.

This sequence belongs to the PurK/PurT family. As to quaternary structure, homodimer.

The enzyme catalyses N(1)-(5-phospho-beta-D-ribosyl)glycinamide + formate + ATP = N(2)-formyl-N(1)-(5-phospho-beta-D-ribosyl)glycinamide + ADP + phosphate + H(+). Its pathway is purine metabolism; IMP biosynthesis via de novo pathway; N(2)-formyl-N(1)-(5-phospho-D-ribosyl)glycinamide from N(1)-(5-phospho-D-ribosyl)glycinamide (formate route): step 1/1. In terms of biological role, involved in the de novo purine biosynthesis. Catalyzes the transfer of formate to 5-phospho-ribosyl-glycinamide (GAR), producing 5-phospho-ribosyl-N-formylglycinamide (FGAR). Formate is provided by PurU via hydrolysis of 10-formyl-tetrahydrofolate. This is Formate-dependent phosphoribosylglycinamide formyltransferase from Nostoc sp. (strain PCC 7120 / SAG 25.82 / UTEX 2576).